The sequence spans 58 residues: Large ribosomal subunit protein uL30 (58 aa).

The protein belongs to the universal ribosomal protein uL30 family. In terms of assembly, part of the 50S ribosomal subunit.

In Azotobacter vinelandii (strain DJ / ATCC BAA-1303), this protein is Large ribosomal subunit protein uL30.